Reading from the N-terminus, the 388-residue chain is Formate-dependent phosphoribosylglycinamide formyltransferase (388 aa).

Residues 15 to 16 (EL) and Glu-75 contribute to the N(1)-(5-phospho-beta-D-ribosyl)glycinamide site. ATP-binding positions include Arg-107, Lys-148, 153-158 (SSGKGQ), 188-191 (EEFL), and Glu-196. An ATP-grasp domain is found at 112-302 (DLASAELALL…EFELHLRAVL (191 aa)). The Mg(2+) site is built by Glu-261 and Glu-273. N(1)-(5-phospho-beta-D-ribosyl)glycinamide contacts are provided by residues Asp-280, Lys-350, and 357 to 358 (RR).

Belongs to the PurK/PurT family. As to quaternary structure, homodimer.

The enzyme catalyses N(1)-(5-phospho-beta-D-ribosyl)glycinamide + formate + ATP = N(2)-formyl-N(1)-(5-phospho-beta-D-ribosyl)glycinamide + ADP + phosphate + H(+). It functions in the pathway purine metabolism; IMP biosynthesis via de novo pathway; N(2)-formyl-N(1)-(5-phospho-D-ribosyl)glycinamide from N(1)-(5-phospho-D-ribosyl)glycinamide (formate route): step 1/1. In terms of biological role, involved in the de novo purine biosynthesis. Catalyzes the transfer of formate to 5-phospho-ribosyl-glycinamide (GAR), producing 5-phospho-ribosyl-N-formylglycinamide (FGAR). Formate is provided by PurU via hydrolysis of 10-formyl-tetrahydrofolate. This chain is Formate-dependent phosphoribosylglycinamide formyltransferase, found in Prochlorococcus marinus (strain MIT 9313).